We begin with the raw amino-acid sequence, 1946 residues long: Sickle tail protein (1946 aa).

2 disordered regions span residues 1-83 (MEES…GMQP) and 113-176 (ERLR…VRSA). Residues 18 to 36 (DSRQMPQQGRSNLHVTSQE) show a composition bias toward polar residues. The segment covering 38–47 (AACRRPRERL) has biased composition (basic and acidic residues). Residue S169 is modified to Phosphoserine. At Y244 the chain carries Phosphotyrosine. Disordered stretches follow at residues 305–324 (HPPH…HSLP) and 339–374 (AIPG…RDVK). The span at 308–324 (HVIPNSPPSTPVPHSLP) shows a compositional bias: pro residues. Over residues 352–367 (SSLPVSRSISPSPSAI) the composition is skewed to low complexity. S357 is a glycosylation site (O-linked (GlcNAc) serine). S361 and S365 each carry phosphoserine. Phosphotyrosine is present on Y393. Residues 455-512 (SRKYPDSHLPTLGSKTPPASPHRVGDLRMIDLHPHLNTHGPPHTLQPDRASPSRQSFK) form a disordered region. T470 carries the post-translational modification Phosphothreonine. Phosphoserine is present on S474. Residues 477 to 488 (RVGDLRMIDLHP) are compositionally biased toward basic and acidic residues. Coiled-coil stretches lie at residues 557 to 581 (RETR…QSAL) and 644 to 685 (TSLL…ELEI). Residue S809 is modified to Phosphoserine. Disordered regions lie at residues 853-875 (EETA…DVKS) and 891-947 (SPVV…PVNG). 2 stretches are compositionally biased toward polar residues: residues 891 to 909 (SPVV…NPAQ) and 927 to 947 (QEVT…PVNG). The stretch at 962 to 990 (SAKNRAVSIEKAEKKWEEKRQNLEHYNGK) forms a coiled coil. Positions 1008-1221 (PNLEMPPASS…LRPSGPPKWE (214 aa)) are disordered. S1032, S1035, S1038, and S1049 each carry phosphoserine. Over residues 1049–1058 (SPPPPPPPPR) the composition is skewed to pro residues. Residues 1151-1162 (NPNSHAEQSRAN) show a composition bias toward polar residues. Residues 1176-1194 (PKEKKNLEFYHEDVRKSDV) are compositionally biased toward basic and acidic residues. Phosphoserine is present on S1466. Residues 1469–1495 (FEECDEELERMLTEEKIEEEEEDENED) adopt a coiled-coil conformation. Disordered stretches follow at residues 1482–1567 (EEKI…VDDQ), 1622–1664 (AKRF…RKST), and 1691–1946 (VDTS…KETS). Over residues 1484 to 1495 (KIEEEEEDENED) the composition is skewed to acidic residues. Residues 1498 to 1508 (VRTSSQMSCEQ) show a composition bias toward polar residues. Composition is skewed to basic and acidic residues over residues 1509-1518 (VDSRSDRMGQ) and 1622-1644 (AKRF…RRQE). The stretch at 1659 to 1688 (EIRKSTYRTLDSLEQTIKQLENTISEMSPR) forms a coiled coil. Positions 1739-1759 (KGSSTTPQTSRMPVPMTSKNR) are enriched in polar residues. Position 1741 is a phosphoserine (S1741). Residues 1765–1777 (KASKQSKLQDPRQ) show a composition bias toward basic and acidic residues. Residues 1806–1825 (ALSPSSGKSSSLPSASGDSS) show a composition bias toward low complexity. S1843 is modified (phosphoserine). Residues 1851-1866 (HSASLIPSVSNGSLKF) show a composition bias toward polar residues. Residues 1890-1899 (AAPTTSSSSS) show a composition bias toward low complexity. Phosphoserine occurs at positions 1899, 1902, and 1905. A compositionally biased stretch (polar residues) spans 1920–1946 (HTPSLASYKAQNGSSSKATPSTAKETS).

In terms of assembly, interacts with CPNE4 (via VWFA domain). Expressed predominantly in the notochord and mesonephros during embryogenesis as well as in other areas such as the epithalamus sulcus, lens vesicle, inner retinal layer, heart, hepatic primordial surface, infundibulum, surface ectoderm, hind gut and limb bud mesenchyme. In adults, expressed in a range of tissues including the nucleus pulposus, corpus callosum, kidney, cardiac muscle, Sertoli cells and hair follicles.

The protein resides in the cytoplasm. Its subcellular location is the cytoskeleton. It is found in the microtubule organizing center. It localises to the centrosome. Its function is as follows. Required for normal development of intervertebral disks. The chain is Sickle tail protein from Mus musculus (Mouse).